The following is a 207-amino-acid chain: MGMLEARELLCERDERTLFSGLSFTLNAGEWVQITGSNGAGKTTLLRLLTGLSRPDAGDVLWQGQPLHQVRDSYHQNLLWIGHQPGIKTRLTALENLHFYHRDGDTAQCLEALAQAGLAGFEDIPVNQLSAGQQRRVALARLWLTRATLWILDEPFTAIDVNGVDRLTQRMAQHTEQGGIVILTTHQPLNVAESKIRRISLTQTGAA.

Residues 4 to 207 (LEARELLCER…RISLTQTGAA (204 aa)) enclose the ABC transporter domain. 36-43 (GSNGAGKT) provides a ligand contact to ATP.

This sequence belongs to the ABC transporter superfamily. CcmA exporter (TC 3.A.1.107) family. The complex is composed of two ATP-binding proteins (CcmA) and two transmembrane proteins (CcmB).

The protein resides in the cell inner membrane. It catalyses the reaction heme b(in) + ATP + H2O = heme b(out) + ADP + phosphate + H(+). Its function is as follows. Part of the ABC transporter complex CcmAB involved in the biogenesis of c-type cytochromes; once thought to export heme, this seems not to be the case, but its exact role is uncertain. Responsible for energy coupling to the transport system. This is Cytochrome c biogenesis ATP-binding export protein CcmA from Escherichia coli O6:H1 (strain CFT073 / ATCC 700928 / UPEC).